The sequence spans 130 residues: Anti-adapter protein IraD (130 aa).

This sequence belongs to the GpW/Gp25 family. IraD subfamily. In terms of assembly, interacts with RssB.

Its subcellular location is the cytoplasm. In terms of biological role, inhibits RpoS proteolysis by regulating RssB activity, thereby increasing the stability of the sigma stress factor RpoS during oxidative stress. Its effect on RpoS stability is due to its interaction with RssB, which probably blocks the interaction of RssB with RpoS, and the consequent delivery of the RssB-RpoS complex to the ClpXP protein degradation pathway. The protein is Anti-adapter protein IraD of Escherichia coli O9:H4 (strain HS).